Consider the following 167-residue polypeptide: Ribosome maturation factor RimM (167 aa).

A PRC barrel domain is found at 94-167; that stretch reads EENEYFIKDL…VMVVHLLEGL (74 aa).

This sequence belongs to the RimM family. As to quaternary structure, binds ribosomal protein uS19.

The protein localises to the cytoplasm. Its function is as follows. An accessory protein needed during the final step in the assembly of 30S ribosomal subunit, possibly for assembly of the head region. Essential for efficient processing of 16S rRNA. May be needed both before and after RbfA during the maturation of 16S rRNA. It has affinity for free ribosomal 30S subunits but not for 70S ribosomes. The polypeptide is Ribosome maturation factor RimM (Thermoanaerobacter pseudethanolicus (strain ATCC 33223 / 39E) (Clostridium thermohydrosulfuricum)).